Reading from the N-terminus, the 78-residue chain is Protein DsvD (78 aa).

This sequence to A.fulgidus DsrD.

May play an essential role in dissimilatory sulfite reduction. This chain is Protein DsvD (dsvD), found in Nitratidesulfovibrio vulgaris (strain ATCC 29579 / DSM 644 / CCUG 34227 / NCIMB 8303 / VKM B-1760 / Hildenborough) (Desulfovibrio vulgaris).